The sequence spans 268 residues: Chymotrypsin-C (268 aa).

An N-terminal signal peptide occupies residues 1–16 (MLGITVLAAILACASS). Positions 17-29 (CGDPTFPPNLSAR) are cleaved as a propeptide — activation peptide. Intrachain disulfides connect Cys-17-Cys-141, Cys-59-Cys-75, Cys-155-Cys-222, Cys-186-Cys-202, and Cys-212-Cys-243. A glycan (N-linked (GlcNAc...) asparagine) is linked at Asn-25. The 238-residue stretch at 30 to 267 (VVGGEDAVPN…YIDWIKEKIQ (238 aa)) folds into the Peptidase S1 domain. The active-site Charge relay system is His-74. Residues Asn-79 and Asn-90 are each glycosylated (N-linked (GlcNAc...) asparagine). Catalysis depends on Asp-121, which acts as the Charge relay system. Asn-182 carries an N-linked (GlcNAc...) asparagine glycan. The active-site Charge relay system is Ser-216.

The protein belongs to the peptidase S1 family. Elastase subfamily.

It catalyses the reaction Preferential cleavage: Leu-|-Xaa, Tyr-|-Xaa, Phe-|-Xaa, Met-|-Xaa, Trp-|-Xaa, Gln-|-Xaa, Asn-|-Xaa.. In terms of biological role, regulates activation and degradation of trypsinogens and procarboxypeptidases by targeting specific cleavage sites within their zymogen precursors. Has chymotrypsin-type protease activity and hypocalcemic activity. Cleaves TRY4 and TRY5 and thereby inhibits their autoactivation. This chain is Chymotrypsin-C (Ctrc), found in Mus musculus (Mouse).